The primary structure comprises 129 residues: UPF0344 protein SSP1805 (129 aa).

Helical transmembrane passes span M1–F21, I36–I56, M68–I88, and L100–M120.

This sequence belongs to the UPF0344 family.

It localises to the cell membrane. The sequence is that of UPF0344 protein SSP1805 from Staphylococcus saprophyticus subsp. saprophyticus (strain ATCC 15305 / DSM 20229 / NCIMB 8711 / NCTC 7292 / S-41).